The chain runs to 60 residues: UPF0434 protein Ent638_1436 (60 aa).

Belongs to the UPF0434 family.

This Enterobacter sp. (strain 638) protein is UPF0434 protein Ent638_1436.